Here is a 377-residue protein sequence, read N- to C-terminus: Membrane protein MLC1 (377 aa).

Over residues 1–23 (MTQEPFREELAYDRMPTLERGRQ) the composition is skewed to basic and acidic residues. The segment at 1–36 (MTQEPFREELAYDRMPTLERGRQDPASYAPDAKPSD) is disordered. The next 4 helical transmembrane spans lie at 52–72 (WVFSVLMGSCLLVTSGFSLYL), 82–100 (YLRCAAGSCIPSAIVSFTV), 111–131 (FQILFVSTFAVTTTCLIWFGC), and 144–164 (FNLILLLLLELLMAATVIIAA). Serine 177 and serine 179 each carry phosphoserine. Helical transmembrane passes span 199 to 219 (SVVEVIAGISAVLGGIIALNV), 230 to 250 (VTFFWILVACFPSAIASHVAA), 257 to 277 (LVEVLIAISSLTSPLLFTASG), and 304 to 324 (LLLLLLLVLLLQAGLNTGTAI).

In terms of assembly, interacts with ATP1B1. Part of a complex containing ATP1B1, TRPV4, AQP4 and HEPACAM. In terms of tissue distribution, expressed in the brain, with highest levels found in the amygdala, nucleus caudatus, thalamus and hippocampus.

It is found in the membrane. The protein localises to the cell membrane. The protein resides in the cytoplasm. Its subcellular location is the perinuclear region. It localises to the endoplasmic reticulum. Transmembrane protein mainly expressed in brain astrocytes that may play a role in transport across the blood-brain and brain-cerebrospinal fluid barriers. Regulates the response of astrocytes to hypo-osmosis by promoting calcium influx. May function as regulatory protein of membrane protein complexes such as ion channels. This chain is Membrane protein MLC1, found in Homo sapiens (Human).